The primary structure comprises 165 residues: CDP-archaeol synthase (165 aa).

3 helical membrane passes run 4-24 (IVQLFLLIWPPYVANGSAVLA), 78-98 (LLDAFLLATAAIVGDLLGAFV), and 118-138 (FLLMALLVYSLYRELHIPLLL).

The protein belongs to the CDP-archaeol synthase family. The cofactor is Mg(2+).

The protein resides in the cell membrane. It carries out the reaction 2,3-bis-O-(geranylgeranyl)-sn-glycerol 1-phosphate + CTP + H(+) = CDP-2,3-bis-O-(geranylgeranyl)-sn-glycerol + diphosphate. The protein operates within membrane lipid metabolism; glycerophospholipid metabolism. Catalyzes the formation of CDP-2,3-bis-(O-geranylgeranyl)-sn-glycerol (CDP-archaeol) from 2,3-bis-(O-geranylgeranyl)-sn-glycerol 1-phosphate (DGGGP) and CTP. This reaction is the third ether-bond-formation step in the biosynthesis of archaeal membrane lipids. In Pyrobaculum calidifontis (strain DSM 21063 / JCM 11548 / VA1), this protein is CDP-archaeol synthase.